The sequence spans 1400 residues: DNA-directed RNA polymerase subunit beta' (1400 aa).

Residues Cys-70, Cys-72, Cys-85, and Cys-88 each coordinate Zn(2+). Asp-460, Asp-462, and Asp-464 together coordinate Mg(2+). Zn(2+) is bound by residues Cys-814, Cys-888, Cys-895, and Cys-898. The tract at residues 1368 to 1400 (RQAKRAEAQEGPSAEQATDNLAALLNAGFSSDE) is disordered.

It belongs to the RNA polymerase beta' chain family. In terms of assembly, the RNAP catalytic core consists of 2 alpha, 1 beta, 1 beta' and 1 omega subunit. When a sigma factor is associated with the core the holoenzyme is formed, which can initiate transcription. Mg(2+) is required as a cofactor. Requires Zn(2+) as cofactor.

It carries out the reaction RNA(n) + a ribonucleoside 5'-triphosphate = RNA(n+1) + diphosphate. Functionally, DNA-dependent RNA polymerase catalyzes the transcription of DNA into RNA using the four ribonucleoside triphosphates as substrates. The chain is DNA-directed RNA polymerase subunit beta' from Vibrio parahaemolyticus serotype O3:K6 (strain RIMD 2210633).